The following is a 113-amino-acid chain: Putative glycerol transporter Lin0367 (113 aa).

A run of 4 helical transmembrane segments spans residues isoleucine 3–methionine 23, glutamate 30–isoleucine 50, glycine 63–leucine 83, and valine 92–phenylalanine 112.

It is found in the membrane. Functionally, could be involved in the glycerol uptake either via facilitated diffusion or active transport. The polypeptide is Putative glycerol transporter Lin0367 (Listeria innocua serovar 6a (strain ATCC BAA-680 / CLIP 11262)).